The following is a 595-amino-acid chain: Sulfite reductase [NADPH] flavoprotein alpha-component (595 aa).

The Flavodoxin-like domain maps to 59–197; it reads ITVLSASQTG…KADIWRREIV (139 aa). FMN is bound by residues 65–70, 112–115, and 148–157; these read SQTGNA, STQG, and LGDSSYTYFA. An FAD-binding FR-type domain is found at 230–444; it reads EEPFTAHLVV…IEHNDNFRLP (215 aa). FAD contacts are provided by residues threonine 318, phenylalanine 352, 382–385, 400–402, tyrosine 406, and 415–418; these read RLYS, TVS, and GGAS. NADP(+) is bound by residues 515–516, 521–525, and aspartate 557; these read SQ and KIYVQ. FAD is bound at residue tyrosine 595.

Belongs to the NADPH-dependent sulphite reductase flavoprotein subunit CysJ family. This sequence in the N-terminal section; belongs to the flavodoxin family. It in the C-terminal section; belongs to the flavoprotein pyridine nucleotide cytochrome reductase family. In terms of assembly, alpha(8)-beta(8). The alpha component is a flavoprotein, the beta component is a hemoprotein. It depends on FAD as a cofactor. The cofactor is FMN.

The enzyme catalyses hydrogen sulfide + 3 NADP(+) + 3 H2O = sulfite + 3 NADPH + 4 H(+). The protein operates within sulfur metabolism; hydrogen sulfide biosynthesis; hydrogen sulfide from sulfite (NADPH route): step 1/1. Functionally, component of the sulfite reductase complex that catalyzes the 6-electron reduction of sulfite to sulfide. This is one of several activities required for the biosynthesis of L-cysteine from sulfate. The flavoprotein component catalyzes the electron flow from NADPH -&gt; FAD -&gt; FMN to the hemoprotein component. This Baumannia cicadellinicola subsp. Homalodisca coagulata protein is Sulfite reductase [NADPH] flavoprotein alpha-component.